Here is a 337-residue protein sequence, read N- to C-terminus: Holliday junction branch migration complex subunit RuvB (337 aa).

Residues 4–186 (ADRLIAADNP…FGIVQRLEYY (183 aa)) form a large ATPase domain (RuvB-L) region. ATP contacts are provided by residues Ile25, Arg26, Gly67, Lys70, Thr71, Thr72, 133–135 (EDY), Arg176, Tyr186, and Arg223. Residue Thr71 coordinates Mg(2+). Residues 187–257 (KVEDLQHIVQ…IADKALNMLD (71 aa)) are small ATPAse domain (RuvB-S). The head domain (RuvB-H) stretch occupies residues 260 to 337 (VRGFDYMDRK…LHFGIDKPDK (78 aa)). DNA contacts are provided by Arg296, Arg315, and Arg320.

It belongs to the RuvB family. In terms of assembly, homohexamer. Forms an RuvA(8)-RuvB(12)-Holliday junction (HJ) complex. HJ DNA is sandwiched between 2 RuvA tetramers; dsDNA enters through RuvA and exits via RuvB. An RuvB hexamer assembles on each DNA strand where it exits the tetramer. Each RuvB hexamer is contacted by two RuvA subunits (via domain III) on 2 adjacent RuvB subunits; this complex drives branch migration. In the full resolvosome a probable DNA-RuvA(4)-RuvB(12)-RuvC(2) complex forms which resolves the HJ.

The protein localises to the cytoplasm. It carries out the reaction ATP + H2O = ADP + phosphate + H(+). Its function is as follows. The RuvA-RuvB-RuvC complex processes Holliday junction (HJ) DNA during genetic recombination and DNA repair, while the RuvA-RuvB complex plays an important role in the rescue of blocked DNA replication forks via replication fork reversal (RFR). RuvA specifically binds to HJ cruciform DNA, conferring on it an open structure. The RuvB hexamer acts as an ATP-dependent pump, pulling dsDNA into and through the RuvAB complex. RuvB forms 2 homohexamers on either side of HJ DNA bound by 1 or 2 RuvA tetramers; 4 subunits per hexamer contact DNA at a time. Coordinated motions by a converter formed by DNA-disengaged RuvB subunits stimulates ATP hydrolysis and nucleotide exchange. Immobilization of the converter enables RuvB to convert the ATP-contained energy into a lever motion, pulling 2 nucleotides of DNA out of the RuvA tetramer per ATP hydrolyzed, thus driving DNA branch migration. The RuvB motors rotate together with the DNA substrate, which together with the progressing nucleotide cycle form the mechanistic basis for DNA recombination by continuous HJ branch migration. Branch migration allows RuvC to scan DNA until it finds its consensus sequence, where it cleaves and resolves cruciform DNA. This chain is Holliday junction branch migration complex subunit RuvB, found in Aliivibrio fischeri (strain ATCC 700601 / ES114) (Vibrio fischeri).